Reading from the N-terminus, the 475-residue chain is Ribulose bisphosphate carboxylase large chain (475 aa).

A propeptide spanning residues 1–2 is cleaved from the precursor; it reads MS. The residue at position 3 (proline 3) is an N-acetylproline. At lysine 14 the chain carries N6,N6,N6-trimethyllysine. Positions 123 and 173 each coordinate substrate. Lysine 175 (proton acceptor) is an active-site residue. Residue lysine 177 participates in substrate binding. Positions 201, 203, and 204 each coordinate Mg(2+). Lysine 201 is subject to N6-carboxylysine. The active-site Proton acceptor is histidine 294. The substrate site is built by arginine 295, histidine 327, and serine 379.

This sequence belongs to the RuBisCO large chain family. Type I subfamily. Heterohexadecamer of 8 large chains and 8 small chains; disulfide-linked. The disulfide link is formed within the large subunit homodimers. The cofactor is Mg(2+). In terms of processing, the disulfide bond which can form in the large chain dimeric partners within the hexadecamer appears to be associated with oxidative stress and protein turnover.

Its subcellular location is the plastid. It is found in the chloroplast. It catalyses the reaction 2 (2R)-3-phosphoglycerate + 2 H(+) = D-ribulose 1,5-bisphosphate + CO2 + H2O. The catalysed reaction is D-ribulose 1,5-bisphosphate + O2 = 2-phosphoglycolate + (2R)-3-phosphoglycerate + 2 H(+). Its function is as follows. RuBisCO catalyzes two reactions: the carboxylation of D-ribulose 1,5-bisphosphate, the primary event in carbon dioxide fixation, as well as the oxidative fragmentation of the pentose substrate in the photorespiration process. Both reactions occur simultaneously and in competition at the same active site. This Stellaria media (Common chickweed) protein is Ribulose bisphosphate carboxylase large chain.